Consider the following 159-residue polypeptide: Phosphopantetheine adenylyltransferase (159 aa).

Position 10 (Thr10) interacts with substrate. ATP-binding positions include 10 to 11 and His18; that span reads TF. Residues Lys42, Leu74, and Arg88 each contribute to the substrate site. ATP-binding positions include 89–91, Glu99, and 124–130; these read GLR and NAFISSS.

It belongs to the bacterial CoaD family. In terms of assembly, homohexamer. The cofactor is Mg(2+).

The protein localises to the cytoplasm. The catalysed reaction is (R)-4'-phosphopantetheine + ATP + H(+) = 3'-dephospho-CoA + diphosphate. Its pathway is cofactor biosynthesis; coenzyme A biosynthesis; CoA from (R)-pantothenate: step 4/5. In terms of biological role, reversibly transfers an adenylyl group from ATP to 4'-phosphopantetheine, yielding dephospho-CoA (dPCoA) and pyrophosphate. The sequence is that of Phosphopantetheine adenylyltransferase from Campylobacter fetus subsp. fetus (strain 82-40).